Consider the following 357-residue polypeptide: GTPase Obg (357 aa).

Residues M1 to L159 enclose the Obg domain. The 175-residue stretch at A160–R334 folds into the OBG-type G domain. GTP-binding positions include G166 to S173, F191 to H195, D213 to G216, N284 to D287, and S315 to L317. Mg(2+) contacts are provided by S173 and T193.

Belongs to the TRAFAC class OBG-HflX-like GTPase superfamily. OBG GTPase family. In terms of assembly, monomer. The cofactor is Mg(2+).

The protein resides in the cytoplasm. Its function is as follows. An essential GTPase which binds GTP, GDP and possibly (p)ppGpp with moderate affinity, with high nucleotide exchange rates and a fairly low GTP hydrolysis rate. Plays a role in control of the cell cycle, stress response, ribosome biogenesis and in those bacteria that undergo differentiation, in morphogenesis control. The protein is GTPase Obg of Paracidovorax citrulli (strain AAC00-1) (Acidovorax citrulli).